The chain runs to 63 residues: Non-structural protein 3b (63 aa).

This is Non-structural protein 3b from Avian infectious bronchitis virus (strain UK/183/66) (IBV).